A 258-amino-acid chain; its full sequence is Hydroxyacylglutathione hydrolase cytoplasmic (258 aa).

Zn(2+) is bound by residues histidine 54 and histidine 56. Positions 58 and 59 each coordinate Fe cation. 2 residues coordinate Zn(2+): histidine 112 and aspartate 135. Aspartate 135 contacts Fe cation. Substrate is bound by residues 144–146 (KFF) and 174–176 (HEY). Position 174 (histidine 174) interacts with Fe cation.

Belongs to the metallo-beta-lactamase superfamily. Glyoxalase II family. In terms of assembly, homodimer. Fe(2+) serves as cofactor. The cofactor is Zn(2+). Requires Fe(3+) as cofactor. Mainly expressed in flowers and flower buds. Also detected in roots and leaves.

It is found in the cytoplasm. The enzyme catalyses an S-(2-hydroxyacyl)glutathione + H2O = a 2-hydroxy carboxylate + glutathione + H(+). The protein operates within secondary metabolite metabolism; methylglyoxal degradation; (R)-lactate from methylglyoxal: step 2/2. Thiolesterase that catalyzes the hydrolysis of S-D-lactoyl-glutathione to form glutathione and D-lactic acid. The polypeptide is Hydroxyacylglutathione hydrolase cytoplasmic (GLX2-2) (Arabidopsis thaliana (Mouse-ear cress)).